The sequence spans 110 residues: Protein OPG154 (110 aa).

It belongs to the orthopoxvirus OPG154 protein family. Homohexamers, covalently linked. Interacts with OPG144 and OPG153.

It localises to the virion. Its function is as follows. Structural protein involved in the envelopment of mature virion (MV) to form the wrapped virion (WV). The wrapping consists of the addition of Golgi membranes to the mature virion. Participates in mature virion (MV) movement within the infected cell. May play an indirect role in MV-cell fusion. This is Protein OPG154 (OPG154) from Homo sapiens (Human).